Reading from the N-terminus, the 267-residue chain is MDDRFVKEINQFFAEIKIQNNVRLVDGKFGKMCVIKHEPTGKLFVKKSVAIKYVTEIEPLVHQLMKDNRYFIKLYYSLTTLKSQILILDYVAGGDLFDFLKKHKKVSEAETRSIVGQLTEALNALHSYKIIHNDLKLENVLYVRHKQIYLCDYGLCKIVNTSSCRDGTKEYMSPEKLKRQNYDVHVDWWALGILTYELLIGHHPYKHSNDNEEDFDLDVLQQRQQKKLHKYNFLSSDAQKFLEAMLMYNINYRLCTYETVIKHSFLS.

The 249-residue stretch at 18–266 (IQNNVRLVDG…YETVIKHSFL (249 aa)) folds into the Protein kinase domain. Residues 24 to 32 (LVDGKFGKM) and lysine 47 each bind ATP. Aspartate 134 acts as the Proton acceptor in catalysis.

It belongs to the protein kinase superfamily. Ser/Thr protein kinase family.

The enzyme catalyses L-seryl-[protein] + ATP = O-phospho-L-seryl-[protein] + ADP + H(+). It catalyses the reaction L-threonyl-[protein] + ATP = O-phospho-L-threonyl-[protein] + ADP + H(+). The chain is Serine/threonine-protein kinase 1 (PK1) from Heliothis zea nuclear polyhedrosis virus (HzSNPV).